Here is a 312-residue protein sequence, read N- to C-terminus: Acetyl-coenzyme A carboxylase carboxyl transferase subunit beta (312 aa).

The interval 1 to 52 (MEMDTAVENPAVEKNGQPTPSSTSTATDAAPTPNAPNRPAPNTAGNRKRGVP) is disordered. The segment covering 18-32 (PTPSSTSTATDAAPT) has biased composition (low complexity). Residues 55–312 (VWRKCDSCGA…IATAIDYCGK (258 aa)) form the CoA carboxyltransferase N-terminal domain. 4 residues coordinate Zn(2+): Cys59, Cys62, Cys78, and Cys81. The C4-type zinc finger occupies 59-81 (CDSCGASLFYKEVQQRLNVCPQC).

It belongs to the AccD/PCCB family. Acetyl-CoA carboxylase is a heterohexamer composed of biotin carboxyl carrier protein (AccB), biotin carboxylase (AccC) and two subunits each of ACCase subunit alpha (AccA) and ACCase subunit beta (AccD). The cofactor is Zn(2+).

The protein resides in the cytoplasm. The enzyme catalyses N(6)-carboxybiotinyl-L-lysyl-[protein] + acetyl-CoA = N(6)-biotinyl-L-lysyl-[protein] + malonyl-CoA. It functions in the pathway lipid metabolism; malonyl-CoA biosynthesis; malonyl-CoA from acetyl-CoA: step 1/1. In terms of biological role, component of the acetyl coenzyme A carboxylase (ACC) complex. Biotin carboxylase (BC) catalyzes the carboxylation of biotin on its carrier protein (BCCP) and then the CO(2) group is transferred by the transcarboxylase to acetyl-CoA to form malonyl-CoA. The polypeptide is Acetyl-coenzyme A carboxylase carboxyl transferase subunit beta (Rhodopirellula baltica (strain DSM 10527 / NCIMB 13988 / SH1)).